A 272-amino-acid polypeptide reads, in one-letter code: Undecaprenyl-diphosphatase (272 aa).

A run of 8 helical transmembrane segments spans residues 4 to 24 (FEVIKALFLGFVEGLTEFLPI), 43 to 63 (GGRVFEVVIQLGAILAVCWLY), 86 to 106 (ISVLIAFFPAVIIGVLAVDFI), 109 to 129 (VLFSPIVVAIALIVGALIIFW), 145 to 165 (ITFKQALLVGLAQCVAMIPGT), 186 to 206 (TEFSFFLAMPTMLGAATFDLI), 222 to 242 (VGFVAAFIAALLVVKALVLFV), and 249 to 269 (VFAWYRIVLGVIILIAAMFFN).

Belongs to the UppP family.

Its subcellular location is the cell inner membrane. It carries out the reaction di-trans,octa-cis-undecaprenyl diphosphate + H2O = di-trans,octa-cis-undecaprenyl phosphate + phosphate + H(+). In terms of biological role, catalyzes the dephosphorylation of undecaprenyl diphosphate (UPP). Confers resistance to bacitracin. In Acinetobacter baumannii (strain SDF), this protein is Undecaprenyl-diphosphatase.